Consider the following 237-residue polypeptide: uncharacterized protein (237 aa).

This is an uncharacterized protein from Schizosaccharomyces pombe (strain 972 / ATCC 24843) (Fission yeast).